Consider the following 4454-residue polypeptide: E3 ubiquitin-protein ligase HUWE1 (4454 aa).

Residues 521–575 are disordered; it reads RASSSNSSTSISGPGPGPGPGPGPGPGPGPGPGPGPGLGPSLGPGPGPGPRPGVQ. The segment covering 523–533 has biased composition (low complexity); that stretch reads SSSNSSTSISG. The segment covering 535-571 has biased composition (pro residues); sequence GPGPGPGPGPGPGPGPGPGPGPGLGPSLGPGPGPGPR. Ser-724 and Ser-725 each carry phosphoserine. 3 disordered regions span residues 781 to 834, 1054 to 1077, and 1094 to 1114; these read QKAD…VVGT, DEKA…AGSM, and TLAP…KSKI. Positions 801 to 811 are enriched in acidic residues; the sequence is ASSEDEEEEEV. The span at 813-832 shows a compositional bias: polar residues; the sequence is AMQSFNSAQQNETEPNQQVV. Position 816 is a phosphoserine (Ser-816). Ser-1160 carries the post-translational modification Phosphoserine. Positions 1367-1378 are enriched in basic and acidic residues; that stretch reads LSKEKEGSRGEE. The tract at residues 1367–1396 is disordered; it reads LSKEKEGSRGEEEAGQEEGGSRREPQVNQQ. The UBA domain maps to 1392–1431; that stretch reads QVNQQQLQQLMDMGFTREHAMEALLNTSTMEQATEYLLTH. Phosphoserine is present on residues Ser-1444, Ser-1446, Ser-1458, and Ser-1471. Residues 1446–1465 form the UIM domain; sequence SEEDQMMRAIAMSLGQDIPM. Residues 1472–1491 are disordered; the sequence is PEEVACRKEEEERKAREKQE. In terms of domain architecture, WWE spans 1679–1756; that stretch reads RAQMTKYLQS…ETGNRRPVML (78 aa). Positions 1766–1802 are disordered; sequence KNSKSSNGQELEKTLEESKETDIKRKENKGNDIPLAL. Basic and acidic residues predominate over residues 1775 to 1795; the sequence is ELEKTLEESKETDIKRKENKG. A Phosphoserine modification is found at Ser-1983. Disordered regions lie at residues 2095–2142, 2339–2420, and 2433–2556; these read APAE…SKPL, SLFG…QEMQ, and LERD…ASPL. Over residues 2097–2112 the composition is skewed to low complexity; that stretch reads AETSTTGTSQGEGAST. Thr-2112 bears the Phosphothreonine mark. Over residues 2114 to 2134 the composition is skewed to basic and acidic residues; that stretch reads EETREGKKDKEGDRTSEEGKQ. The span at 2339–2368 shows a compositional bias: low complexity; sequence SLFGSKSASSKSKSEQDAQGASQDSSSHQQ. Ser-2343 carries the post-translational modification Phosphoserine. Lys-2344 is modified (N6-acetyllysine). 2 stretches are compositionally biased toward acidic residues: residues 2372–2383 and 2391–2402; these read EPGEAEVQEEDH and ADGDIMDGEAET. Phosphoserine is present on residues Ser-2439, Ser-2442, and Ser-2468. Residues 2465–2475 show a composition bias toward polar residues; sequence SNLSQASTLQA. Acidic residues predominate over residues 2485 to 2549; it reads DPEDEEEHTQ…SEMELDEDYP (65 aa). Phosphoserine occurs at positions 2604, 2609, and 2612. Thr-2631 carries the phosphothreonine modification. A phosphoserine mark is found at Ser-2661, Ser-2672, and Ser-2696. A compositionally biased stretch (basic and acidic residues) spans 2781 to 2793; it reads IIDKGKEDKENRD. 2 disordered regions span residues 2781–3047 and 3113–3136; these read IIDK…GVDP and QQRA…MDPV. Residues 2794-2813 are compositionally biased toward polar residues; sequence QSAQCTVSKTNDSTEQNVSD. Over residues 2815–2849 the composition is skewed to low complexity; the sequence is TPMPDSYPTTPSSTDAPTSESKETLGTLQPSQQQP. Thr-2828 is subject to Phosphothreonine. Polar residues-rich tracts occupy residues 2895–2912, 2924–2941, and 2954–2967; these read AETT…TSLS, AVSS…SLAS, and AGSS…SSTP. 6 positions are modified to phosphoserine: Ser-2903, Ser-2910, Ser-2912, Ser-2938, Ser-2964, and Ser-2965. Thr-2966 carries the post-translational modification Phosphothreonine. Low complexity predominate over residues 2990–3009; it reads PPEDSSPPASSESSSTRDSA. Position 2995 is a phosphoserine (Ser-2995). 5 positions are modified to phosphoserine: Ser-3193, Ser-3194, Ser-3199, Ser-3204, and Ser-3212. Residue Arg-3226 is modified to Omega-N-methylarginine. Disordered stretches follow at residues 3320-3343, 3431-3458, 3482-3501, 3548-3590, and 3615-3642; these read PKLS…SHEN, QRTK…SQSS, GKNS…ETSL, SEVQ…TTPV, and TPTT…EGGS. Basic and acidic residues predominate over residues 3432 to 3446; sequence RTKETNCESDRERGS. Positions 3447-3458 are enriched in low complexity; sequence KQACSPCSSQSS. Composition is skewed to low complexity over residues 3552-3579 and 3615-3628; these read TNSS…ATAP and TPTT…TSTT. Residues Ser-3633, Ser-3740, Ser-3830, Ser-3835, Ser-3837, and Ser-3838 each carry the phosphoserine modification. The segment at 3815 to 3836 is disordered; it reads TRRANKKAKQTGRLGSSGLGSA. Residues 3826 to 3836 are compositionally biased toward low complexity; it reads GRLGSSGLGSA. 2 disordered regions span residues 3859–3927 and 3974–4028; these read EGQR…LPLL and RESK…SSSL. The segment covering 3871 to 3880 has biased composition (polar residues); sequence TSESSNQSET. A phosphoserine mark is found at Ser-3887, Ser-3895, and Ser-3907. A compositionally biased stretch (polar residues) spans 3894 to 3905; the sequence is PSPSAQDTQSIV. Phosphothreonine is present on Thr-3910. 2 stretches are compositionally biased toward basic and acidic residues: residues 3913-3922 and 3974-3995; these read GEKEKEERPP and RESK…KDEP. Phosphoserine is present on residues Ser-3986 and Ser-3999. Pro residues predominate over residues 3996–4005; it reads PPLSPAPLTP. A phosphothreonine mark is found at Thr-4004 and Thr-4007. Residues 4018-4028 are compositionally biased toward polar residues; it reads EPSSMHISSSL. An HECT domain is found at 4118 to 4454; sequence SPEEMKNRLY…QECSEGFGLA (337 aa). A Phosphotyrosine modification is found at Tyr-4351. Cys-4421 acts as the Glycyl thioester intermediate in catalysis.

This sequence belongs to the UPL family. TOM1/PTR1 subfamily. As to quaternary structure, interacts with isoform p14ARF of CDKN2A which strongly inhibits HUWE1 ubiquitin ligase activity. Interacts with MYCN, POLB and CDC6. Interacts with isoform 2 of PA2G4. Interacts with NR1D1. Interacts with AMBRA1. Interacts with HAPSTR1. Interacts with HAPSTR2. In hepatocytes, interacts with PAQR3; the interaction promotes PPARA poylubiquitination and STUB1-mediated degradation. Post-translationally, phosphorylated on tyrosine, phosphorylation is probably required for its ability to inhibit TP53 transactivation. As to expression, widely expressed.

It localises to the cytoplasm. Its subcellular location is the nucleus. The protein localises to the mitochondrion. It carries out the reaction S-ubiquitinyl-[E2 ubiquitin-conjugating enzyme]-L-cysteine + [acceptor protein]-L-lysine = [E2 ubiquitin-conjugating enzyme]-L-cysteine + N(6)-ubiquitinyl-[acceptor protein]-L-lysine.. Its pathway is protein modification; protein ubiquitination. In terms of biological role, E3 ubiquitin-protein ligase which mediates ubiquitination and subsequent proteasomal degradation of target proteins. Regulates apoptosis by catalyzing the polyubiquitination and degradation of MCL1. Mediates monoubiquitination of DNA polymerase beta (POLB) at 'Lys-41', 'Lys-61' and 'Lys-81', thereby playing a role in base-excision repair. Also ubiquitinates the p53/TP53 tumor suppressor and core histones including H1, H2A, H2B, H3 and H4. Ubiquitinates MFN2 to negatively regulate mitochondrial fusion in response to decreased stearoylation of TFRC. Ubiquitination of MFN2 also takes place following induction of mitophagy; AMBRA1 acts as a cofactor for HUWE1-mediated ubiquitination. Regulates neural differentiation and proliferation by catalyzing the polyubiquitination and degradation of MYCN. May regulate abundance of CDC6 after DNA damage by polyubiquitinating and targeting CDC6 to degradation. Mediates polyubiquitination of PA2G4. Acts in concert with MYCBP2 to regulate the circadian clock gene expression by promoting the lithium-induced ubiquination and degradation of NR1D1. Binds to an upstream initiator-like sequence in the preprodynorphin gene. Mediates HAPSTR1 degradation, but is also a required cofactor in the pathway by which HAPSTR1 governs stress signaling. Acts as a regulator of the JNK and NF-kappa-B signaling pathways by mediating assembly of heterotypic 'Lys-63'-/'Lys-48'-linked branched ubiquitin chains that are then recognized by TAB2: HUWE1 mediates branching of 'Lys-48'-linked chains of substrates initially modified with 'Lys-63'-linked conjugates by TRAF6. 'Lys-63'-/'Lys-48'-linked branched ubiquitin chains protect 'Lys-63'-linkages from CYLD deubiquitination. Ubiquitinates PPARA in hepatocytes. In Rattus norvegicus (Rat), this protein is E3 ubiquitin-protein ligase HUWE1 (Huwe1).